Reading from the N-terminus, the 354-residue chain is N-acetyl-gamma-glutamyl-phosphate reductase (354 aa).

Residue Cys-156 is part of the active site.

Belongs to the NAGSA dehydrogenase family. Type 1 subfamily.

Its subcellular location is the cytoplasm. The enzyme catalyses N-acetyl-L-glutamate 5-semialdehyde + phosphate + NADP(+) = N-acetyl-L-glutamyl 5-phosphate + NADPH + H(+). It functions in the pathway amino-acid biosynthesis; L-arginine biosynthesis; N(2)-acetyl-L-ornithine from L-glutamate: step 3/4. Its function is as follows. Catalyzes the NADPH-dependent reduction of N-acetyl-5-glutamyl phosphate to yield N-acetyl-L-glutamate 5-semialdehyde. This chain is N-acetyl-gamma-glutamyl-phosphate reductase, found in Bordetella bronchiseptica (strain ATCC BAA-588 / NCTC 13252 / RB50) (Alcaligenes bronchisepticus).